A 172-amino-acid polypeptide reads, in one-letter code: HAD-like hydrolase superfamily protein P8B7.31 (172 aa).

Aspartate 14 functions as the Nucleophile in the catalytic mechanism. Mg(2+) is bound by residues aspartate 14, aspartate 16, and aspartate 137. The Proton donor role is filled by aspartate 16.

It belongs to the HAD-like hydrolase superfamily.

The protein resides in the cytoplasm. It localises to the nucleus. The polypeptide is HAD-like hydrolase superfamily protein P8B7.31 (Schizosaccharomyces pombe (strain 972 / ATCC 24843) (Fission yeast)).